The sequence spans 162 residues: Transcriptional repressor NrdR (162 aa).

A zinc finger lies at 3–34 (CPFCQFEGLKVTDSRDAMEMNAIRRRRECLNC). The ATP-cone domain maps to 48-138 (VQVQKRDGTY…VYKRFKDLGE (91 aa)).

It belongs to the NrdR family. Requires Zn(2+) as cofactor.

Functionally, negatively regulates transcription of bacterial ribonucleotide reductase nrd genes and operons by binding to NrdR-boxes. The polypeptide is Transcriptional repressor NrdR (Protochlamydia amoebophila (strain UWE25)).